Consider the following 539-residue polypeptide: CTP synthase (539 aa).

The tract at residues 1–268 (MSFKCIFLTG…STFITEKLGL (268 aa)) is amidoligase domain. CTP is bound at residue Ser14. Residue Ser14 coordinates UTP. Position 15 to 20 (15 to 20 (SLGKGL)) interacts with ATP. Tyr55 contacts L-glutamine. An ATP-binding site is contributed by Asp72. Residues Asp72 and Glu142 each contribute to the Mg(2+) site. Residues 149 to 151 (DIE), 188 to 193 (KTKPTQ), and Lys224 each bind CTP. UTP is bound by residues 188-193 (KTKPTQ) and Lys224. The Glutamine amidotransferase type-1 domain occupies 294–533 (RIGLVGKYVQ…IQAAILYSRN (240 aa)). Gly353 contacts L-glutamine. Catalysis depends on Cys380, which acts as the Nucleophile; for glutamine hydrolysis. L-glutamine-binding positions include 381-384 (LGMQ), Glu404, and Arg461. Active-site residues include His506 and Glu508.

This sequence belongs to the CTP synthase family. As to quaternary structure, homotetramer.

The enzyme catalyses UTP + L-glutamine + ATP + H2O = CTP + L-glutamate + ADP + phosphate + 2 H(+). It catalyses the reaction L-glutamine + H2O = L-glutamate + NH4(+). It carries out the reaction UTP + NH4(+) + ATP = CTP + ADP + phosphate + 2 H(+). The protein operates within pyrimidine metabolism; CTP biosynthesis via de novo pathway; CTP from UDP: step 2/2. Its activity is regulated as follows. Allosterically activated by GTP, when glutamine is the substrate; GTP has no effect on the reaction when ammonia is the substrate. The allosteric effector GTP functions by stabilizing the protein conformation that binds the tetrahedral intermediate(s) formed during glutamine hydrolysis. Inhibited by the product CTP, via allosteric rather than competitive inhibition. Catalyzes the ATP-dependent amination of UTP to CTP with either L-glutamine or ammonia as the source of nitrogen. Regulates intracellular CTP levels through interactions with the four ribonucleotide triphosphates. This Chlamydia felis (strain Fe/C-56) (Chlamydophila felis) protein is CTP synthase.